Consider the following 488-residue polypeptide: Glutamyl-tRNA(Gln) amidotransferase subunit A (488 aa).

Residues Lys77 and Ser152 each act as charge relay system in the active site. Ser176 (acyl-ester intermediate) is an active-site residue.

This sequence belongs to the amidase family. GatA subfamily. As to quaternary structure, heterotrimer of A, B and C subunits.

The catalysed reaction is L-glutamyl-tRNA(Gln) + L-glutamine + ATP + H2O = L-glutaminyl-tRNA(Gln) + L-glutamate + ADP + phosphate + H(+). Functionally, allows the formation of correctly charged Gln-tRNA(Gln) through the transamidation of misacylated Glu-tRNA(Gln) in organisms which lack glutaminyl-tRNA synthetase. The reaction takes place in the presence of glutamine and ATP through an activated gamma-phospho-Glu-tRNA(Gln). The protein is Glutamyl-tRNA(Gln) amidotransferase subunit A of Streptococcus pyogenes serotype M4 (strain MGAS10750).